A 959-amino-acid chain; its full sequence is Vacuolar membrane protease (959 aa).

Residues 1 to 13 (MARLNPLSFTPGP) lie on the Cytoplasmic side of the membrane. Residues 14–34 (VIFFTCAVYIALFAALLTVHL) traverse the membrane as a helical segment. The Vacuolar portion of the chain corresponds to 35 to 378 (RVPDYPSKTP…KVFVVFQLHT (344 aa)). N-linked (GlcNAc...) asparagine glycosylation is found at N48, N102, and N105. Positions 128 to 149 (GSEDDEPYHSPQSSPPGERRLD) are disordered. 2 residues coordinate Zn(2+): H158 and D170. Residue E204 is the Proton acceptor of the active site. Zn(2+)-binding residues include E205, E230, and H303. Residues 379–399 (MFALCVTLLVVAPLFLIGLTF) traverse the membrane as a helical segment. Residues 400–432 (GLSKADKNYLFARKAYMYSSDDDHPVHLYGWRG) lie on the Cytoplasmic side of the membrane. The helical transmembrane segment at 433 to 453 (FFRFPIVFSIATAVVVGLAYL) threads the bilayer. At 454–463 (MVRLNPLILY) the chain is on the vacuolar side. A helical transmembrane segment spans residues 464–484 (SSPYAVWSMMLSAWFSVAWFF). Over 485-498 (SRGASAMRPSALQR) the chain is Cytoplasmic. The chain crosses the membrane as a helical span at residues 499–519 (MYALIWLFAGSFALLAFVTVL). At 520 to 524 (SNNYQ) the chain is on the vacuolar side. Residues 525–545 (VAGGYFALFYFAGIFLALVLS) form a helical membrane-spanning segment. Over 546–645 (YLELFFAPTK…YPGEQDWSGK (100 aa)) the chain is Cytoplasmic. Disordered stretches follow at residues 566–594 (DEPV…DATE) and 606–635 (FARH…LKQP). The segment covering 612-626 (RRDSIDDENGNRDEE) has biased composition (basic and acidic residues). Residues 646–666 (LPGWLWLLQLLLVAPIVVILV) form a helical membrane-spanning segment. Residues 667-688 (GQIALLLTSALHQTPADGNSSL) are Vacuolar-facing. An N-linked (GlcNAc...) asparagine glycan is attached at N685. A helical transmembrane segment spans residues 689–709 (FVYLAFALLTTLLLAPIGPFI). At 710–716 (HRFTWHV) the chain is on the cytoplasmic side. The chain crosses the membrane as a helical span at residues 717–737 (PTFVFLVCVATVIYNLVAFPF). Residues 738–959 (SREHRLKVYF…LVEGFKYFQV (222 aa)) lie on the Vacuolar side of the membrane. N785, N818, N834, N864, and N899 each carry an N-linked (GlcNAc...) asparagine glycan.

Belongs to the peptidase M28 family. Zn(2+) serves as cofactor.

It is found in the vacuole membrane. Its function is as follows. May be involved in vacuolar sorting and osmoregulation. This is Vacuolar membrane protease from Phaeosphaeria nodorum (strain SN15 / ATCC MYA-4574 / FGSC 10173) (Glume blotch fungus).